Consider the following 277-residue polypeptide: Large ribosomal subunit protein uL2c (277 aa).

Residues 228-254 (VDHPHGGGEGRCPVGHAQPRTPWGKPA) form a disordered region.

This sequence belongs to the universal ribosomal protein uL2 family. Part of the 50S ribosomal subunit.

It localises to the plastid. It is found in the chloroplast. In Ostreococcus tauri, this protein is Large ribosomal subunit protein uL2c (rpl2).